The sequence spans 472 residues: WASH complex subunit 1 (472 aa).

The segment at 1-51 (MPQNRSMESQAYSLPLILPDLRREEAIHQITDTLQHLQTVSNDIFSRILQR) is required for WASH complex assembly. Disordered stretches follow at residues 289-365 (ENSR…SDGR), 377-412 (GIGK…GDLM), and 426-472 (ISGK…DWES). Pro residues-rich tracts occupy residues 301-319 (LPPP…PPEP) and 327-336 (SLAPPLPIPA). The interval 352–472 (QGAPKEVVNP…GDGDEEDWES (121 aa)) is VCA. Residues 364–386 (GRASLLESIRQAGGIGKAKLRNV) form the WH2 domain. Residues 385–401 (NVKEKKLEKKKMKEQEQ) are compositionally biased toward basic and acidic residues.

It belongs to the WASH1 family. As to quaternary structure, component of the WASH complex.

Its subcellular location is the early endosome membrane. The protein resides in the recycling endosome membrane. In terms of biological role, acts as a nucleation-promoting factor at the surface of endosomes, where it recruits and activates the Arp2/3 complex to induce actin polymerization, playing a key role in the fission of tubules that serve as transport intermediates during endosome sorting. This is WASH complex subunit 1 from Xenopus tropicalis (Western clawed frog).